The primary structure comprises 460 residues: tRNA (guanine(37)-N(1))-methyltransferase (460 aa).

Residues His-204, 243 to 244 (DL), 271 to 272 (DA), and Asn-292 contribute to the S-adenosyl-L-methionine site. Low complexity predominate over residues 390 to 428 (ASTTTTPTTSNTNTSTTTSTTSTSTTTTESTNTNNSANN). The interval 390-460 (ASTTTTPTTS…SIDTNKKLKN (71 aa)) is disordered. Over residues 442 to 451 (DSNETNETDS) the composition is skewed to acidic residues.

Belongs to the class I-like SAM-binding methyltransferase superfamily. TRM5/TYW2 family. In terms of assembly, monomer.

The protein localises to the mitochondrion matrix. The protein resides in the nucleus. It localises to the cytoplasm. It catalyses the reaction guanosine(37) in tRNA + S-adenosyl-L-methionine = N(1)-methylguanosine(37) in tRNA + S-adenosyl-L-homocysteine + H(+). In terms of biological role, specifically methylates the N1 position of guanosine-37 in various cytoplasmic and mitochondrial tRNAs. Methylation is not dependent on the nature of the nucleoside 5' of the target nucleoside. This is the first step in the biosynthesis of wybutosine (yW), a modified base adjacent to the anticodon of tRNAs and required for accurate decoding. The protein is tRNA (guanine(37)-N(1))-methyltransferase (trmt5) of Dictyostelium discoideum (Social amoeba).